Consider the following 94-residue polypeptide: Co-chaperonin GroES (94 aa).

Belongs to the GroES chaperonin family. In terms of assembly, heptamer of 7 subunits arranged in a ring. Interacts with the chaperonin GroEL.

Its subcellular location is the cytoplasm. Together with the chaperonin GroEL, plays an essential role in assisting protein folding. The GroEL-GroES system forms a nano-cage that allows encapsulation of the non-native substrate proteins and provides a physical environment optimized to promote and accelerate protein folding. GroES binds to the apical surface of the GroEL ring, thereby capping the opening of the GroEL channel. This chain is Co-chaperonin GroES, found in Ehrlichia chaffeensis.